The primary structure comprises 227 residues: tRNA (guanine-N(7)-)-methyltransferase (227 aa).

Glutamate 58, glutamate 83, aspartate 110, and aspartate 132 together coordinate S-adenosyl-L-methionine. Aspartate 132 is an active-site residue. Residues lysine 136, aspartate 168, and 205 to 208 (TRFE) each bind substrate.

Belongs to the class I-like SAM-binding methyltransferase superfamily. TrmB family.

The catalysed reaction is guanosine(46) in tRNA + S-adenosyl-L-methionine = N(7)-methylguanosine(46) in tRNA + S-adenosyl-L-homocysteine. The protein operates within tRNA modification; N(7)-methylguanine-tRNA biosynthesis. Its function is as follows. Catalyzes the formation of N(7)-methylguanine at position 46 (m7G46) in tRNA. This Acidithiobacillus ferrooxidans (strain ATCC 23270 / DSM 14882 / CIP 104768 / NCIMB 8455) (Ferrobacillus ferrooxidans (strain ATCC 23270)) protein is tRNA (guanine-N(7)-)-methyltransferase.